The sequence spans 1972 residues: TP53-binding protein 1 (1972 aa).

3 disordered regions span residues 24–273 (DSQP…VAAM), 290–332 (QIQK…CSLA), and 346–507 (GQRS…LGLS). Phosphoserine is present on residues serine 25 and serine 63. Positions 82-91 (EHLKENKVAD) are enriched in basic and acidic residues. Over residues 94–121 (DSSNLDTCGSISQVIEQLPQPNRTSSVL) the composition is skewed to polar residues. Serine 105 and serine 124 each carry phosphoserine. The span at 138–149 (ELEQKEKEKEED) shows a compositional bias: basic and acidic residues. Over residues 151–168 (SGNTTHSLGAEDTASSQL) the composition is skewed to polar residues. Phosphoserine is present on residues serine 166, serine 176, and serine 178. Positions 195–205 (LQSVTTNSGYT) are enriched in polar residues. Lysine 217 participates in a covalent cross-link: Glycyl lysine isopeptide (Lys-Gly) (interchain with G-Cter in SUMO1); alternate. Residue lysine 217 forms a Glycyl lysine isopeptide (Lys-Gly) (interchain with G-Cter in SUMO2); alternate linkage. Phosphoserine occurs at positions 222, 265, and 294. 2 stretches are compositionally biased toward polar residues: residues 300–322 (LSTQEDLFDQSNKTVSSDGCSTP) and 346–361 (GQRSLVQDSLSTNSSD). A Phosphothreonine modification is found at threonine 302. Residues serine 366, serine 380, serine 395, serine 398, serine 429, serine 452, and serine 464 each carry the phosphoserine modification. Positions 426–441 (STVSPQASTPISQSTP) are enriched in polar residues. Positions 442–452 (VFPPGSLPIPS) are enriched in pro residues. The segment covering 481-490 (HSSSLTVECS) has biased composition (polar residues). Positions 491-501 (KTSEIEPKNSP) are enriched in basic and acidic residues. Phosphoserine is present on residues serine 500, serine 507, serine 518, serine 523, and serine 525. Polar residues predominate over residues 520-531 (SEYSQSPKMESL). A disordered region spans residues 520–556 (SEYSQSPKMESLSSHRIDEDGENTQIEDTEPMSPVLN). Residues 538 to 549 (EDGENTQIEDTE) show a composition bias toward acidic residues. Residues threonine 543 and threonine 548 each carry the phosphothreonine modification. A phosphoserine mark is found at serine 552, serine 566, and serine 580. The interval 568 to 595 (LMNPAQDGEVQLSQNDDKTKGDDTDTRD) is disordered. A compositionally biased stretch (basic and acidic residues) spans 582-595 (NDDKTKGDDTDTRD). Serine 630, serine 635, serine 639, and serine 640 each carry phosphoserine. Residues 649-687 (EIKEHHPEEGSSGSEVEEIPETPCESQGEELKEENMESV) form a disordered region. Position 670 is a phosphothreonine (threonine 670). 8 positions are modified to phosphoserine: serine 692, serine 724, serine 727, serine 771, serine 809, serine 830, serine 831, and serine 834. The segment at 742-911 (EQEAWEEATS…TPFHFTLPKE (170 aa)) is disordered. Residues 798 to 816 (AENRLDTKEEKSVEYEGDL) are compositionally biased toward basic and acidic residues. The segment covering 839–848 (RADDPLRLDQ) has biased composition (basic and acidic residues). Polar residues predominate over residues 849–864 (ELQQPQTQEKTSNSLT). Threonine 855 is subject to Phosphothreonine. Lysine 868 participates in a covalent cross-link: Glycyl lysine isopeptide (Lys-Gly) (interchain with G-Cter in SUMO1); alternate. A Glycyl lysine isopeptide (Lys-Gly) (interchain with G-Cter in SUMO2); alternate cross-link involves residue lysine 868. Over residues 890-902 (HASQSFCESSSET) the composition is skewed to polar residues. A Phosphothreonine modification is found at threonine 922. Residue lysine 930 forms a Glycyl lysine isopeptide (Lys-Gly) (interchain with G-Cter in SUMO2) linkage. Residues serine 970 and serine 975 each carry the phosphoserine modification. Lysine 984 is covalently cross-linked (Glycyl lysine isopeptide (Lys-Gly) (interchain with G-Cter in SUMO2)). Disordered regions lie at residues 997 to 1028 (EASEESLQFNLEKPATGERKNGSTAVAESVAS) and 1045 to 1103 (ENEA…VSPA). A compositionally biased stretch (polar residues) spans 1018–1028 (GSTAVAESVAS). Residue serine 1028 is modified to Phosphoserine. A Phosphothreonine modification is found at threonine 1056. Serine 1068 carries the phosphoserine modification. The span at 1071–1083 (EEEKEKLEGDHTI) shows a compositional bias: basic and acidic residues. Residues serine 1086, serine 1094, serine 1101, and serine 1114 each carry the phosphoserine modification. A compositionally biased stretch (basic and acidic residues) spans 1127–1139 (DQKEGRSTNKENP). Disordered regions lie at residues 1127–1148 (DQKEGRSTNKENPSKALIERPS), 1188–1232 (NFGK…QPPH), and 1269–1478 (VTEE…DGLD). A Phosphoserine modification is found at serine 1148. The span at 1188-1200 (NFGKQDATVQTER) shows a compositional bias: polar residues. Threonine 1214 is subject to Phosphothreonine. Residues serine 1216 and serine 1219 each carry the phosphoserine modification. Acidic residues predominate over residues 1272-1285 (ETEEPIVECQECET). Composition is skewed to low complexity over residues 1298–1307 (DLGDISSFSS) and 1316–1329 (SSGTSLSAMHSSGS). 2 positions are modified to phosphoserine: serine 1317 and serine 1342. Arginine 1355 is subject to Omega-N-methylarginine. Serine 1362 bears the Phosphoserine mark. Residue lysine 1365 forms a Glycyl lysine isopeptide (Lys-Gly) (interchain with G-Cter in SUMO2) linkage. The residue at position 1368 (serine 1368) is a Phosphoserine. Residue threonine 1372 is modified to Phosphothreonine. Positions 1396 to 1403 (RGRGRRGR) match the GAR motif. A phosphoserine mark is found at serine 1426 and serine 1430. Lysine 1434 is covalently cross-linked (Glycyl lysine isopeptide (Lys-Gly) (interchain with G-Cter in SUMO1); alternate). A Glycyl lysine isopeptide (Lys-Gly) (interchain with G-Cter in SUMO2); alternate cross-link involves residue lysine 1434. Phosphoserine is present on residues serine 1460, serine 1462, and serine 1474. Positions 1484–1603 (NSFVGLRVVA…NRLREQYGLG (120 aa)) are tudor-like. The interaction with dimethylated histone H4 stretch occupies residues 1495–1523 (WSSNGYFYSGKITRDVGAGKYKLLFDDGY). A Glycyl lysine isopeptide (Lys-Gly) (interchain with G-Cter in SUMO1); alternate cross-link involves residue lysine 1563. Lysine 1563 participates in a covalent cross-link: Glycyl lysine isopeptide (Lys-Gly) (interchain with G-Cter in SUMO2); alternate. The UDR motif lies at 1604 to 1631 (PYEAVTPLTKAADISLDNLVEGKRKRRS). A Phosphothreonine modification is found at threonine 1609. Residues serine 1618, serine 1631, and serine 1635 each carry the phosphoserine modification. Disordered regions lie at residues 1622–1719 (LVEG…EEQR) and 1745–1768 (LASRSKLPDGPTGSSEEEEEFLEI). Positions 1634 to 1650 (SSPATPTASSSSSTTPT) are enriched in low complexity. A phosphothreonine mark is found at threonine 1638 and threonine 1648. Phosphoserine is present on residues serine 1656, serine 1673, and serine 1678. Lysine 1685 participates in a covalent cross-link: Glycyl lysine isopeptide (Lys-Gly) (interchain with G-Cter in ubiquitin). 3 positions are modified to phosphoserine: serine 1701, serine 1759, and serine 1778. BRCT domains lie at 1724 to 1848 (LNKT…NYLL) and 1864 to 1964 (PREN…QHPK).

As to quaternary structure, homoligomer. Interacts with p53/TP53 (via the central domain). Interacts with DCLRE1C. Interacts with histone H2AX and this requires phosphorylation of H2AX on 'Ser-139'. Interacts with histone H4 that has been dimethylated at 'Lys-20' (H4K20me2). Has low affinity for histone H4 containing monomethylated 'Lys-20' (H4K20me1). Does not bind histone H4 containing unmethylated or trimethylated 'Lys-20' (H4K20me3). Has low affinity for histone H3 that has been dimethylated on 'Lys-79'. Has very low affinity for histone H3 that has been monomethylated on 'Lys-79' (in vitro). Does not bind unmethylated histone H3. Interacts with histone H2A monoubiquitinated at 'Lys-15' (H2AK15Ub). Interacts with PWWP3A/EXPAND1. Interacts with CHEK2; modulates CHEK2 phosphorylation at 'Thr-68' in response to infrared. Interacts with MSL1; this interaction may be required for MSL1 DNA repair activity, but not for histone acetyltransferase activity. Interacts (when phosphorylated by ATM) with RIF1. Interacts (via the Tudor-like domain) with NUDT16L1/TIRR; interaction masks the Tudor-like domain and prevents recruitment to chromatin. Interacts with PAXIP1. Interacts with SHLD2. Interacts (when phosphorylated) with TOPBP1. Interacts with GFI1; promoting methylation by PRMT1. Interacts with (phosphorylated) DYNLL1; specifically binds DYNLL1 phosphorylated at 'Ser-88' and promotes its recruitment to double stand breaks (DSBs). In terms of assembly, (Microbial infection) Interacts (via C-terminus) with Epstein-Barr virus lytic switch protein BZLF1 (via C-terminus); this interaction is involved in the activation of the viral lytic cycle. Asymmetrically dimethylated on Arg residues by PRMT1. Methylation is required for DNA binding. Post-translationally, phosphorylated at basal level in the absence of DNA damage. Phosphorylated by ATM in response to DNA damage: phosphorylation at different sites promotes interaction with different set of proteins: phosphorylation at the N-terminus by ATM (residues from 6-178) promotes interaction with PAXIP1 and non-homologous end joining (NHEJ) of dysfunctional telomeres. Phosphorylation by ATM at residues that are located more C-terminus (residues 300-650) leads to promote interaction with RIF1. Interaction with RIF1 leads to disrupt interaction with NUDT16L1/TIRR. Phosphorylation at Thr-1609 and Ser-1618 in the UDR motif blocks interaction with H2AK15ub. Dephosphorylated by PPP4C. Hyperphosphorylation during mitosis correlates with its exclusion from chromatin and DNA lesions. Hyperphosphorylated in an ATR-dependent manner in response to DNA damage induced by UV irradiation. Dephosphorylated by PPP5C. Phosphorylation at Ser-366 and Thr-670 promotes interaction with TOPBP1. Phosphorylated by VRK1. In terms of processing, monoubiquitinated at Lys-1685 by MSL2 is reponse to DNA damage, leading to its stabilization.

The protein localises to the nucleus. It is found in the chromosome. Its subcellular location is the centromere. The protein resides in the kinetochore. Functionally, double-strand break (DSB) repair protein involved in response to DNA damage, telomere dynamics and class-switch recombination (CSR) during antibody genesis. Plays a key role in the repair of double-strand DNA breaks (DSBs) in response to DNA damage by promoting non-homologous end joining (NHEJ)-mediated repair of DSBs and specifically counteracting the function of the homologous recombination (HR) repair protein BRCA1. In response to DSBs, phosphorylation by ATM promotes interaction with RIF1 and dissociation from NUDT16L1/TIRR, leading to recruitment to DSBs sites. Recruited to DSBs sites by recognizing and binding histone H2A monoubiquitinated at 'Lys-15' (H2AK15Ub) and histone H4 dimethylated at 'Lys-20' (H4K20me2), two histone marks that are present at DSBs sites. Required for immunoglobulin class-switch recombination (CSR) during antibody genesis, a process that involves the generation of DNA DSBs. Participates in the repair and the orientation of the broken DNA ends during CSR. In contrast, it is not required for classic NHEJ and V(D)J recombination. Promotes NHEJ of dysfunctional telomeres via interaction with PAXIP1. In Homo sapiens (Human), this protein is TP53-binding protein 1.